Here is a 123-residue protein sequence, read N- to C-terminus: Mediator of RNA polymerase II transcription subunit 9 (123 aa).

The stretch at 95–123 forms a coiled coil; that stretch reads WQLHIQEKKIELEKKTKHLQRLRESIQKQ.

The protein belongs to the Mediator complex subunit 9 family. As to quaternary structure, component of the Mediator complex.

The protein resides in the nucleus. Component of the Mediator complex, a coactivator involved in the regulated transcription of nearly all RNA polymerase II-dependent genes. Mediator functions as a bridge to convey information from gene-specific regulatory proteins to the basal RNA polymerase II transcription machinery. Mediator is recruited to promoters by direct interactions with regulatory proteins and serves as a scaffold for the assembly of a functional preinitiation complex with RNA polymerase II and the general transcription factors. The polypeptide is Mediator of RNA polymerase II transcription subunit 9 (CSE2) (Kluyveromyces lactis (strain ATCC 8585 / CBS 2359 / DSM 70799 / NBRC 1267 / NRRL Y-1140 / WM37) (Yeast)).